Here is a 2678-residue protein sequence, read N- to C-terminus: Mediator of RNA polymerase II transcription subunit 13 (2678 aa).

12 disordered regions span residues 1–52, 140–285, 495–524, 553–615, 852–993, 1070–1253, 1278–1394, 1462–1502, 1806–1838, 2075–2105, 2225–2307, and 2656–2678; these read MMGT…GYNS, SKKP…QPIS, NSNN…QQQQ, QQQQ…NNNI, SPSS…QQQQ, TSHY…KPFL, LPHN…QDES, SPFS…NNHH, FSGS…SMDD, QNQN…QTQT, SSSS…QEQK, and KLTP…SNNT. Low complexity-rich tracts occupy residues 15–48, 144–162, and 169–186; these read SGSN…PTTS, INNS…TDSS, and NSPS…NSNN. Residues 187-206 show a composition bias toward polar residues; it reads VTKDSPPNATNKMSTSPKSL. Positions 207–276 are enriched in low complexity; it reads SPTISNNNNN…SPPTVASVTS (70 aa). 2 stretches are compositionally biased toward low complexity: residues 553-573 and 587-615; these read QQQQ…DNNN and SSSS…NNNI. A compositionally biased stretch (polar residues) spans 855-872; that stretch reads SPLTQHPSSPHSPFNNVN. A compositionally biased stretch (basic residues) spans 901–916; that stretch reads KKRHGKSQKKGRSSKR. Residues 922 to 950 are compositionally biased toward low complexity; the sequence is SNNNNNNNTTTTSTITATTTTTTPTAATT. Polar residues-rich tracts occupy residues 966 to 979 and 1079 to 1090; these read NIQE…LTTV and PTQNGSQKNNQR. Residues 1109-1150 show a composition bias toward low complexity; that stretch reads TTTTTTTTTTTPTPNPTTTTTQPQTQPQQQSQQQQQPQQTNP. Polar residues predominate over residues 1151-1195; sequence ILPTNSNLITNQKPQQYQPPLQDPFQSIDSQQPKSIQSPTLTNQP. A compositionally biased stretch (low complexity) spans 1201–1211; that stretch reads PTLTNQPLQQY. The segment covering 1281 to 1306 has biased composition (polar residues); the sequence is NTEQSPSNDDLSNPNHLHHGTPTSAI. Residues 1312 to 1321 show a composition bias toward low complexity; the sequence is SSSSSGNNMI. The segment covering 1322–1343 has biased composition (gly residues); that stretch reads GSGGIVGSGGGNTNVSGSGGGM. Residues 1359–1371 are compositionally biased toward basic residues; the sequence is PHHHHHHHHHHHP. Positions 1475 to 1497 are enriched in low complexity; that stretch reads TTTNNNNNHNNNNNNNHPNNHHQ. Residues 1806–1819 show a composition bias toward polar residues; the sequence is FSGSSGLNNSNDRN. Polar residues predominate over residues 2658–2678; the sequence is TPNSKQSPSPINSPHLNSNNT.

It belongs to the Mediator complex subunit 13 family. In terms of assembly, component of the Mediator complex.

It localises to the nucleus. Its function is as follows. Component of the Mediator complex, a coactivator involved in the regulated transcription of nearly all RNA polymerase II-dependent genes. Mediator functions as a bridge to convey information from gene-specific regulatory proteins to the basal RNA polymerase II transcription machinery. Mediator is recruited to promoters by direct interactions with regulatory proteins and serves as a scaffold for the assembly of a functional preinitiation complex with RNA polymerase II and the general transcription factors. Required for the starvation-induced activation of the ACA (adenylyl cyclase) expression pathway at the growth/differentiation transition. The sequence is that of Mediator of RNA polymerase II transcription subunit 13 (amiB) from Dictyostelium discoideum (Social amoeba).